A 641-amino-acid polypeptide reads, in one-letter code: Chaperone protein DnaK (641 aa).

Position 200 is a phosphothreonine; by autocatalysis (Thr-200). Positions 606-623 are enriched in low complexity; sequence AEQGGNADAASGNAQASK. A disordered region spans residues 606–628; sequence AEQGGNADAASGNAQASKAADDV.

The protein belongs to the heat shock protein 70 family.

Its function is as follows. Acts as a chaperone. This Xanthomonas axonopodis pv. citri (strain 306) protein is Chaperone protein DnaK.